Consider the following 183-residue polypeptide: Orotate phosphoribosyltransferase (183 aa).

Residues Arg21, Lys88, and 112–120 (EDVVTTGES) each bind 5-phospho-alpha-D-ribose 1-diphosphate. Thr116 and Arg144 together coordinate orotate.

The protein belongs to the purine/pyrimidine phosphoribosyltransferase family. PyrE subfamily. In terms of assembly, homodimer. Mg(2+) is required as a cofactor.

It catalyses the reaction orotidine 5'-phosphate + diphosphate = orotate + 5-phospho-alpha-D-ribose 1-diphosphate. Its pathway is pyrimidine metabolism; UMP biosynthesis via de novo pathway; UMP from orotate: step 1/2. In terms of biological role, catalyzes the transfer of a ribosyl phosphate group from 5-phosphoribose 1-diphosphate to orotate, leading to the formation of orotidine monophosphate (OMP). This chain is Orotate phosphoribosyltransferase, found in Thermus thermophilus (strain ATCC BAA-163 / DSM 7039 / HB27).